The primary structure comprises 325 residues: MATH domain and coiled-coil domain-containing protein At3g58430 (325 aa).

In terms of domain architecture, MATH spans 6-131 (HKKFCWIIKN…KGDFKIIAEV (126 aa)). A coiled-coil region spans residues 258 to 306 (FKVDWLEKKLDQVKDKKEREQSGLARLHELEEYLLKLKQKCSNLDLLVE).

In Arabidopsis thaliana (Mouse-ear cress), this protein is MATH domain and coiled-coil domain-containing protein At3g58430.